The chain runs to 172 residues: Phosphatidylglycerophosphatase A (172 aa).

Residues 1–31 (MTILPRHKDVAKSRLKMSNPWHLLAVGFGSG) lie on the Cytoplasmic side of the membrane. The chain crosses the membrane as a helical span at residues 32-52 (LSPIVPGTMGSLAAIPFWYLM). Residue threonine 53 is a topological domain, periplasmic. Residues 54 to 74 (FLPWQLYSLVVMLGICIGVYL) form a helical membrane-spanning segment. Residues 75–141 (CHQTAKDMGV…RWFDRNVHGG (67 aa)) lie on the Cytoplasmic side of the membrane. Residues 142–162 (MGIMIDDIVAGVISAGILYFI) traverse the membrane as a helical segment. Residues 163-172 (GHHWPLGILS) are Periplasmic-facing.

It depends on Mg(2+) as a cofactor.

It is found in the cell inner membrane. The enzyme catalyses a 1,2-diacyl-sn-glycero-3-phospho-(1'-sn-glycero-3'-phosphate) + H2O = a 1,2-diacyl-sn-glycero-3-phospho-(1'-sn-glycerol) + phosphate. It functions in the pathway phospholipid metabolism; phosphatidylglycerol biosynthesis; phosphatidylglycerol from CDP-diacylglycerol: step 2/2. In terms of biological role, lipid phosphatase which dephosphorylates phosphatidylglycerophosphate (PGP) to phosphatidylglycerol (PG). This chain is Phosphatidylglycerophosphatase A (pgpA), found in Escherichia coli (strain K12).